Here is a 354-residue protein sequence, read N- to C-terminus: uncharacterized protein (354 aa).

It to yeast YHR056c.

This is an uncharacterized protein from Saccharomyces cerevisiae (strain ATCC 204508 / S288c) (Baker's yeast).